A 264-amino-acid polypeptide reads, in one-letter code: uncharacterized protein (264 aa).

A signal peptide spans 1–26 (MMKKLFHSTLIVLLFFSFFGVQPIHA).

This is an uncharacterized protein from Bacillus subtilis (strain 168).